Consider the following 402-residue polypeptide: Propionate kinase (402 aa).

ATP-binding residues include Asn-11 and Lys-18. Asn-11 contacts Mg(2+). Arg-86 provides a ligand contact to substrate. Asp-143 (proton donor/acceptor) is an active-site residue. Residues His-175, 203–207 (HLGNG), 278–280 (DLR), and 326–330 (GIGEN) each bind ATP.

The protein belongs to the acetokinase family. TdcD subfamily. Homodimer. Mg(2+) serves as cofactor.

It carries out the reaction propanoate + ATP = propanoyl phosphate + ADP. Its pathway is amino-acid degradation; L-threonine degradation via propanoate pathway; propanoate from L-threonine: step 4/4. Its function is as follows. Catalyzes the conversion of propionyl phosphate and ADP to propionate and ATP. The sequence is that of Propionate kinase from Citrobacter koseri (strain ATCC BAA-895 / CDC 4225-83 / SGSC4696).